Consider the following 368-residue polypeptide: MNDETTPANKNPEKAELRCGWTTGACATAATKAALTALITGEFPDPVGIILPKGEVPYFQLAYEGLGEGYAMAGIVKDAGDDPDVTHGATIISTVYPAPPGTGIIFRAGEGVGTVTREGLAIPPGEAAINPVPRRMMTEICEAICAEYGLPADLVITISVPGGEEIAQKTWNPRLGIIGGISILGTTGVVHPFSCSAWIHSIHRGIDVARAAGQKHVLGATGSTSEDAAQALYNLPDFAILDMGDFAGGVLKYLREHPIDRLTIAGGFAKLTKLAQGALDLHSSRSQVDKGFLWQIAERAGAPAGMKERILLANTAMEVLELTQSIGIDIAGPIALEARQTALKTLRGAPVEVEIIVTDRKGNILARV.

Belongs to the CbiD family.

The catalysed reaction is Co-precorrin-5B + S-adenosyl-L-methionine = Co-precorrin-6A + S-adenosyl-L-homocysteine. The protein operates within cofactor biosynthesis; adenosylcobalamin biosynthesis; cob(II)yrinate a,c-diamide from sirohydrochlorin (anaerobic route): step 6/10. Functionally, catalyzes the methylation of C-1 in cobalt-precorrin-5B to form cobalt-precorrin-6A. This Brucella abortus (strain S19) protein is Cobalt-precorrin-5B C(1)-methyltransferase.